Consider the following 585-residue polypeptide: Glutamate decarboxylase 2 (585 aa).

A disordered region spans residues 1–24 (MASPGSGFWSFGSEDGSADPENPG). Phosphoserine occurs at positions 3, 6, 10, and 13. 2 S-palmitoyl cysteine lipidation sites follow: cysteine 30 and cysteine 45. Substrate is bound at residue 181 to 183 (QLS). Lysine 396 bears the N6-(pyridoxal phosphate)lysine mark. Position 558 (arginine 558) interacts with substrate.

Belongs to the group II decarboxylase family. Homodimer. Pyridoxal 5'-phosphate is required as a cofactor. In terms of processing, phosphorylated; which does not affect kinetic parameters or subcellular location. Palmitoylated; which is required for presynaptic clustering.

Its subcellular location is the cytoplasm. The protein resides in the cytosol. It is found in the cytoplasmic vesicle. It localises to the presynaptic cell membrane. The protein localises to the golgi apparatus membrane. It catalyses the reaction L-glutamate + H(+) = 4-aminobutanoate + CO2. In terms of biological role, catalyzes the production of GABA. The chain is Glutamate decarboxylase 2 (Gad2) from Mus musculus (Mouse).